A 198-amino-acid chain; its full sequence is uncharacterized protein (198 aa).

Residues 20-58 adopt a coiled-coil conformation; the sequence is ERVRRDEELARLSADKEQAKNDLEESKRRIARLRGTVYE. The disordered stretch occupies residues 144–198; that stretch reads LSNRKTKNPESDRRRQSRKKKSTQIQASDEMKHRRHHVHKVHHYSQKQSSSTTRR. Basic residues predominate over residues 176-188; that stretch reads HRRHHVHKVHHYS. The span at 189–198 shows a compositional bias: polar residues; sequence QKQSSSTTRR.

It is found in the nucleus. The protein localises to the nucleolus. This is an uncharacterized protein from Schizosaccharomyces pombe (strain 972 / ATCC 24843) (Fission yeast).